Consider the following 364-residue polypeptide: Histidinol-phosphate aminotransferase 1 (364 aa).

Lys211 carries the N6-(pyridoxal phosphate)lysine modification.

It belongs to the class-II pyridoxal-phosphate-dependent aminotransferase family. Histidinol-phosphate aminotransferase subfamily. In terms of assembly, homodimer. It depends on pyridoxal 5'-phosphate as a cofactor.

It carries out the reaction L-histidinol phosphate + 2-oxoglutarate = 3-(imidazol-4-yl)-2-oxopropyl phosphate + L-glutamate. It participates in amino-acid biosynthesis; L-histidine biosynthesis; L-histidine from 5-phospho-alpha-D-ribose 1-diphosphate: step 7/9. This Legionella pneumophila (strain Paris) protein is Histidinol-phosphate aminotransferase 1.